A 160-amino-acid polypeptide reads, in one-letter code: Cytochrome b6-f complex subunit 4 (160 aa).

The next 3 membrane-spanning stretches (helical) occupy residues 36–56 (ILFT…GLAI), 95–115 (LLGI…PFIE), and 131–151 (AVFL…CFPI).

Belongs to the cytochrome b family. PetD subfamily. As to quaternary structure, the 4 large subunits of the cytochrome b6-f complex are cytochrome b6, subunit IV (17 kDa polypeptide, PetD), cytochrome f and the Rieske protein, while the 4 small subunits are PetG, PetL, PetM and PetN. The complex functions as a dimer.

The protein resides in the cellular thylakoid membrane. Component of the cytochrome b6-f complex, which mediates electron transfer between photosystem II (PSII) and photosystem I (PSI), cyclic electron flow around PSI, and state transitions. This is Cytochrome b6-f complex subunit 4 from Picosynechococcus sp. (strain ATCC 27264 / PCC 7002 / PR-6) (Agmenellum quadruplicatum).